The sequence spans 156 residues: Longistatin (156 aa).

An N-terminal signal peptide occupies residues 1-21 (MTHRRLLWALCVAALLGVVAA). 2 EF-hand domains span residues 70–105 (SQDE…TNHH) and 123–156 (DIAS…TNQI). Ca(2+)-binding residues include Asp83, Asp85, Asn87, Lys89, Glu94, Asp135, Asn137, Asp139, Phe141, and Glu146.

In terms of assembly, interacts with host fibrin. Interacts with human RAGE/AGER. As to expression, saliva (at protein level). Salivary gland (at protein level). Not detected in midgut, ovary, trachea, Malpighian tubule system, synganglion and cuticle.

The protein resides in the secreted. It is found in the cytoplasm. With respect to regulation, resistant to inhibition by host SERPINE1. Inhibited by PMSF, aprotinin, antipain and leupeptin. Inhibited by Zn(2+). Its function is as follows. Anticoagulant and fibrinolytic protease that modulates blood feeding of ticks on vertebrate hosts. Degrades host fibrinogen and delays fibrin clot formation. Promotes lysis of fibrin clots in the host by activating host plasminogen in the presence of soluble fibrin. Binds Ca(2+). Hydrolyzes serine protease-specific substrates. Required for the formation of a blood pool, an accumulation of blood and tissue fluid developed at the tick's feeding site. Blocks activation of host AGER/RAGE. Reduces AGER/RAGE-dependent production of reactive oxygen species (ROS) in human endothelial cells. Prevents AGER/RAGE-dependent activation of NF-kappa-B and suppresses expression of adhesion molecules, such as VCAM1, ICAM1 and SELE, and secretion of cytokines, such as CSF3/GCSF and TGF-beta, in human endothelial cells. Suppresses RAGE/AGER-mediated migration of mouse peritoneal resident cells. Reduces AGER/RAGE-mediated inflammation in mice tissues. This chain is Longistatin, found in Haemaphysalis longicornis (Bush tick).